An 810-amino-acid chain; its full sequence is F-BAR domain only protein 2 (810 aa).

The F-BAR domain occupies 3–250 (MAYFVENFWG…NMANTTVESL (248 aa)). The segment at 3–274 (MAYFVENFWG…PGLIEFEECD (272 aa)) is mediates dimerization and binding to membranes enriched in Pi(4,5)-P2 and induces their tubulation. Residues 87–156 (HLDLVRKLQE…CVEQERLKKE (70 aa)) are a coiled coil. Lysine 297 participates in a covalent cross-link: Glycyl lysine isopeptide (Lys-Gly) (interchain with G-Cter in SUMO2). The interval 301-352 (DAESVECPDADSLNIPDVDEEGYSIKPETNQNDTKENHFYSSSDSDSEDEEP) is disordered. A Phosphoserine modification is found at serine 312. Threonine 385 carries the post-translational modification Phosphothreonine. A phosphoserine mark is found at serine 387, serine 394, and serine 403. The tract at residues 403-537 (SNEELTKSKP…VSRGPSPVSL (135 aa)) is disordered. Positions 433–456 (PSLDSSSSSSLTSSSSARPTTPLS) are enriched in low complexity. Phosphoserine is present on residues serine 488, serine 493, serine 496, serine 508, serine 510, serine 511, and serine 533. Positions 502–521 (PLARAESSSSISSSASLSAA) are enriched in low complexity. A mediates interaction with DAB2, EPS15, EPS15R and ITSN1 region spans residues 521–810 (ANTPTVGVSR…FATGRYLADC (290 aa)). Residues 542-809 (TLPVAVALTE…RFATGRYLAD (268 aa)) enclose the MHD domain.

This sequence belongs to the FCHO family. Homodimer; disulfide-linked. May form homotetramer. Interacts with AP2A1. Interacts with EPS15, EPS15R, ITSN1 and ITSN2; recruit those scaffolding proteins which in turn may interact with the adaptor protein complex AP-2 at the plasma membrane. Interacts with DAB2 (via DPF motifs); mediates LDL receptor/LDLR endocytosis. In terms of processing, ubiquitinated. Mainly undergoes monoubiquitination but also polyubiquitination.

It localises to the membrane. The protein resides in the clathrin-coated pit. Functionally, functions in an early step of clathrin-mediated endocytosis. Has both a membrane binding/bending activity and the ability to recruit proteins essential to the formation of functional clathrin-coated pits. Has a lipid-binding activity with a preference for membranes enriched in phosphatidylserine and phosphoinositides (Pi(4,5) biphosphate) like the plasma membrane. Its membrane-bending activity might be important for the subsequent action of clathrin and adaptors in the formation of clathrin-coated vesicles. Involved in adaptor protein complex AP-2-dependent endocytosis of the transferrin receptor, it also functions in the AP-2-independent endocytosis of the LDL receptor. The chain is F-BAR domain only protein 2 (FCHO2) from Pongo abelii (Sumatran orangutan).